We begin with the raw amino-acid sequence, 404 residues long: ATP phosphoribosyltransferase regulatory subunit (404 aa).

The protein belongs to the class-II aminoacyl-tRNA synthetase family. HisZ subfamily. Heteromultimer composed of HisG and HisZ subunits.

The protein resides in the cytoplasm. Its pathway is amino-acid biosynthesis; L-histidine biosynthesis; L-histidine from 5-phospho-alpha-D-ribose 1-diphosphate: step 1/9. Its function is as follows. Required for the first step of histidine biosynthesis. May allow the feedback regulation of ATP phosphoribosyltransferase activity by histidine. This is ATP phosphoribosyltransferase regulatory subunit from Picosynechococcus sp. (strain ATCC 27264 / PCC 7002 / PR-6) (Agmenellum quadruplicatum).